A 528-amino-acid chain; its full sequence is GTPase Obg (528 aa).

One can recognise an Obg domain in the interval 2-159 (ASFVDRVVLH…SDIVLELKSI (158 aa)). In terms of domain architecture, OBG-type G spans 160-343 (ADIALVGFPS…LGFAMAEIVQ (184 aa)). GTP contacts are provided by residues 166–173 (GFPSAGKS), 191–195 (FTTLI), 212–215 (DVPG), 295–298 (NKVD), and 324–326 (SAT). Ser-173 and Thr-193 together coordinate Mg(2+). Positions 363-447 (PRAVNESGFK…DDGVVFDWEP (85 aa)) constitute an OCT domain. The interval 471 to 490 (DRPTRSQKRDEQIERREAKA) is disordered.

This sequence belongs to the TRAFAC class OBG-HflX-like GTPase superfamily. OBG GTPase family. Monomer. Requires Mg(2+) as cofactor.

It is found in the cytoplasm. An essential GTPase which binds GTP, GDP and possibly (p)ppGpp with moderate affinity, with high nucleotide exchange rates and a fairly low GTP hydrolysis rate. Plays a role in control of the cell cycle, stress response, ribosome biogenesis and in those bacteria that undergo differentiation, in morphogenesis control. The protein is GTPase Obg of Paenarthrobacter aurescens (strain TC1).